We begin with the raw amino-acid sequence, 266 residues long: Large ribosomal subunit protein uL2m (266 aa).

The protein belongs to the universal ribosomal protein uL2 family.

The protein localises to the mitochondrion. In Dictyostelium discoideum (Social amoeba), this protein is Large ribosomal subunit protein uL2m (mrpl2).